Here is a 694-residue protein sequence, read N- to C-terminus: MAREYKIEDYRNFGIMAHIDAGKTTMTERILFYTGKNHKIGETHDGASTMDWMEQEQERGITITSAATTTFWQGRDGKKRRFNIIDTPGHVDFTIEVERSLRVLDGAIALLDANAGVEPQTETVWRQAEKYHVPRMVFVNKMDKIGADFYRSVEMVGSRLGAVALPVQLPIGAENDFVGVVDLIEMKALTWDGTIGAPATVGEIPADMADKAEEYREKLIELAVEIDEAAMEAYLEGTMPTNDELRALIRKGTIEVKFHPILCGTAFKNRGVQPLLDAVVEFLPAPTDVPAIKGIDVKTETETTRESSDEAPLSMLAFKIMNDPFVGSLTFARIYSGKLTKGVSLENTVKGKRERIGRMLQMHSNSREDIDEAFAGDIVALAGLKETTTGDTLCDPLKPVILERMEFPDPVIEIAIEPKTKADQEKMGIALNRLAAEDPSFRVKSDEESGQTIIAGMGELHLDILVDRMKREFKVEANVGAPQVAYRESITRAAEIDYTHKKQSGGSGQFARVKIIFEPHDGDDFIFESKIVGGSVPKEYIPGVQKGIESVMGAGPLAGFPMLGVKATLIDGAYHDVDSSVLAFEIASRAAFREGAQKAGAQLLEPIMKVEVVTPEDYVGDVIGDLNSRRGQISGTEARGIATVVNAMVPLANMFGYVNSLRSMSQGRAQYTMQFDHYEPVPTAVAQEIQKKFA.

Residues 8-287 (EDYRNFGIMA…AVVEFLPAPT (280 aa)) form the tr-type G domain. GTP is bound by residues 17 to 24 (AHIDAGKT), 86 to 90 (DTPGH), and 140 to 143 (NKMD).

It belongs to the TRAFAC class translation factor GTPase superfamily. Classic translation factor GTPase family. EF-G/EF-2 subfamily.

The protein resides in the cytoplasm. In terms of biological role, catalyzes the GTP-dependent ribosomal translocation step during translation elongation. During this step, the ribosome changes from the pre-translocational (PRE) to the post-translocational (POST) state as the newly formed A-site-bound peptidyl-tRNA and P-site-bound deacylated tRNA move to the P and E sites, respectively. Catalyzes the coordinated movement of the two tRNA molecules, the mRNA and conformational changes in the ribosome. The protein is Elongation factor G of Brucella canis (strain ATCC 23365 / NCTC 10854 / RM-666).